Consider the following 372-residue polypeptide: Actin-related protein T3 (372 aa).

This sequence belongs to the actin family. As to quaternary structure, interacts with PFN3. As to expression, ubiquitously expressed.

The protein localises to the cytoplasm. Its subcellular location is the cytoskeleton. It localises to the nucleus. The chain is Actin-related protein T3 (ACTRT3) from Homo sapiens (Human).